The sequence spans 665 residues: Ribonuclease R 2 (665 aa).

The RNB domain maps to 202-528 (REDYRNEITY…LIIHRLLHLY (327 aa)). Residues 579–662 (GEVYTGTITG…RKGTVDFEQI (84 aa)) enclose the S1 motif domain.

It belongs to the RNR ribonuclease family. RNase R subfamily.

The protein resides in the cytoplasm. It catalyses the reaction Exonucleolytic cleavage in the 3'- to 5'-direction to yield nucleoside 5'-phosphates.. Functionally, 3'-5' exoribonuclease that releases 5'-nucleoside monophosphates and is involved in maturation of structured RNAs. The sequence is that of Ribonuclease R 2 from Lactococcus lactis subsp. lactis (strain IL1403) (Streptococcus lactis).